The primary structure comprises 564 residues: Arrestin domain-containing protein E (564 aa).

Low complexity predominate over residues 74–146; that stretch reads SQQPQSSQPS…NTSNGFSPPN (73 aa). Disordered regions lie at residues 74–150 and 245–286; these read SQQP…LNKN and ASQP…SFPS. Pro residues predominate over residues 250–259; it reads PQQPQQPQPQ. Positions 260 to 269 are enriched in low complexity; sequence QPQQQQFQQQ. The span at 270–285 shows a compositional bias: polar residues; the sequence is SYNNNNSTQSMLSSFP. Residues 348 to 413 enclose the LIM zinc-binding domain; it reads DKCAACDALL…PMCFESTTGL (66 aa).

The polypeptide is Arrestin domain-containing protein E (adcE) (Dictyostelium discoideum (Social amoeba)).